Consider the following 243-residue polypeptide: Leucinostatins biosynthesis cluster protein S (243 aa).

Its function is as follows. Part of the gene cluster that mediates the biosynthesis of the lipopeptide antibiotics leucinostatins that show extensive biological activities, including antimalarial, antiviral, antibacterial, antifungal, and antitumor activities, as well as phytotoxic. The function of lcsS within the leucinostatins biosynthesis has not been identified yet. The chain is Leucinostatins biosynthesis cluster protein S from Purpureocillium lilacinum (Paecilomyces lilacinus).